We begin with the raw amino-acid sequence, 317 residues long: Ornithine carbamoyltransferase (317 aa).

Residues Ser54 to Thr57, Gln81, Arg105, and His132 to Gln135 each bind carbamoyl phosphate. Residues Asn163, Asp227, and Ser231 to Met232 contribute to the L-ornithine site. Residues Cys267–Leu268 and Arg295 contribute to the carbamoyl phosphate site.

Belongs to the aspartate/ornithine carbamoyltransferase superfamily. OTCase family.

It is found in the cytoplasm. It carries out the reaction carbamoyl phosphate + L-ornithine = L-citrulline + phosphate + H(+). It functions in the pathway amino-acid biosynthesis; L-arginine biosynthesis; L-arginine from L-ornithine and carbamoyl phosphate: step 1/3. Its function is as follows. Reversibly catalyzes the transfer of the carbamoyl group from carbamoyl phosphate (CP) to the N(epsilon) atom of ornithine (ORN) to produce L-citrulline. This is Ornithine carbamoyltransferase from Parafrankia sp. (strain EAN1pec).